A 138-amino-acid chain; its full sequence is Basic leucine zipper 8 (138 aa).

Residues 30–67 (NLPATSDDSSRTAEDNERKRRRKVSNRESARRSRMRKQ) form a disordered region. A compositionally biased stretch (basic and acidic residues) spans 37–47 (DSSRTAEDNER). Residues 45–108 (NERKRRRKVS…EKVIEENMKL (64 aa)) enclose the bZIP domain. The interval 47–68 (RKRRRKVSNRESARRSRMRKQR) is basic motif. Residues 48–55 (KRRRKVSN) carry the Nuclear localization signal motif. The tract at residues 73-87 (LWSMLVQLINKNKSL) is leucine-zipper.

This sequence belongs to the bZIP family. Homodimer.

The protein resides in the nucleus. This is Basic leucine zipper 8 from Arabidopsis thaliana (Mouse-ear cress).